Consider the following 464-residue polypeptide: Argininosuccinate lyase (464 aa).

This sequence belongs to the lyase 1 family. Argininosuccinate lyase subfamily.

Its subcellular location is the cytoplasm. The enzyme catalyses 2-(N(omega)-L-arginino)succinate = fumarate + L-arginine. It participates in amino-acid biosynthesis; L-arginine biosynthesis; L-arginine from L-ornithine and carbamoyl phosphate: step 3/3. The chain is Argininosuccinate lyase from Pseudomonas fluorescens (strain SBW25).